Consider the following 346-residue polypeptide: Protein RecA (346 aa).

68–75 is a binding site for ATP; it reads GPESSGKT.

This sequence belongs to the RecA family.

Its subcellular location is the cytoplasm. In terms of biological role, can catalyze the hydrolysis of ATP in the presence of single-stranded DNA, the ATP-dependent uptake of single-stranded DNA by duplex DNA, and the ATP-dependent hybridization of homologous single-stranded DNAs. It interacts with LexA causing its activation and leading to its autocatalytic cleavage. The sequence is that of Protein RecA from Heliobacterium modesticaldum (strain ATCC 51547 / Ice1).